A 218-amino-acid polypeptide reads, in one-letter code: Esterase FPY3 (218 aa).

Active-site charge relay system residues include Ser95, Asp163, and His190.

It belongs to the LovG family.

It participates in secondary metabolite biosynthesis. Its function is as follows. Esterase; part of the gene cluster that mediates the biosynthesis of the gamma-pyrones fusapyrone (FPY) and deoxyfusapyrone (dFPY). FPY is an undecaketide and thus likely synthesized by the polyketide synthase FPY1 from acetyl-CoA functioning as starter unit and the addition of 10 malonyl-CoA extender units by successive Claisen-condensations. Next to this, FPY shares some rare features: C-glycosylated 4-deoxyglucose at C-3, a gem-dimethyl group at C-13, and an alpha-beta to beta-gamma double bond shift at C-20. During FPY biosynthesis mono-C-methyl groups are transferred to the tetra-, penta-, hexa- and heptaketide, while two C-methyl groups are transferred to the nonaketide, suggesting that the CMet domain is programmed to selectively catalyze two successive C-alpha-methylation reactions of the nonaketide, while other alpha-carbons are non- or mono-methylated only. While the origin of the 4'-deoxyglucose moiety remains opaque, its transfer to C-3 is most likely mediated by the C-glycosyltransferase FPY2. Next to this, the hydroxyl group present at C-33 and discriminating between FPY and dFPY, is likely to be installed by the cytochrome P450 monooxygenase FPY7. No putative function can be predicted for the remaining genes FPY3-FPY6. The chain is Esterase FPY3 from Fusarium mangiferae (Mango malformation disease fungus).